The sequence spans 264 residues: Thymidylate synthase (264 aa).

R21 serves as a coordination point for dUMP. Residue H51 participates in (6R)-5,10-methylene-5,6,7,8-tetrahydrofolate binding. 126 to 127 (RR) provides a ligand contact to dUMP. The Nucleophile role is filled by C146. Residues 166–169 (RSCD), N177, and 207–209 (HLY) contribute to the dUMP site. D169 is a (6R)-5,10-methylene-5,6,7,8-tetrahydrofolate binding site. S263 serves as a coordination point for (6R)-5,10-methylene-5,6,7,8-tetrahydrofolate.

It belongs to the thymidylate synthase family. Bacterial-type ThyA subfamily. In terms of assembly, homodimer.

Its subcellular location is the cytoplasm. The enzyme catalyses dUMP + (6R)-5,10-methylene-5,6,7,8-tetrahydrofolate = 7,8-dihydrofolate + dTMP. It participates in pyrimidine metabolism; dTTP biosynthesis. Its function is as follows. Catalyzes the reductive methylation of 2'-deoxyuridine-5'-monophosphate (dUMP) to 2'-deoxythymidine-5'-monophosphate (dTMP) while utilizing 5,10-methylenetetrahydrofolate (mTHF) as the methyl donor and reductant in the reaction, yielding dihydrofolate (DHF) as a by-product. This enzymatic reaction provides an intracellular de novo source of dTMP, an essential precursor for DNA biosynthesis. This Buchnera aphidicola subsp. Acyrthosiphon pisum (strain APS) (Acyrthosiphon pisum symbiotic bacterium) protein is Thymidylate synthase.